We begin with the raw amino-acid sequence, 141 residues long: Hemoglobin subunit alpha-1/2 (141 aa).

The region spanning 1 to 141 (VLSPADKTNV…VSTVLTSKYR (141 aa)) is the Globin domain. S3 bears the Phosphoserine mark. K7 carries the N6-succinyllysine modification. At T8 the chain carries Phosphothreonine. K11 carries the post-translational modification N6-succinyllysine. K16 carries the N6-acetyllysine; alternate modification. At K16 the chain carries N6-succinyllysine; alternate. The residue at position 24 (Y24) is a Phosphotyrosine. K40 bears the N6-succinyllysine mark. S49 is subject to Phosphoserine. H58 contributes to the O2 binding site. H87 lines the heme b pocket. S102 is modified (phosphoserine). T108 is subject to Phosphothreonine. At S124 the chain carries Phosphoserine. Phosphothreonine occurs at positions 134 and 137. S138 bears the Phosphoserine mark.

The protein belongs to the globin family. In terms of assembly, heterotetramer of two alpha chains and two beta chains. Red blood cells.

Involved in oxygen transport from the lung to the various peripheral tissues. This chain is Hemoglobin subunit alpha-1/2, found in Leptonychotes weddellii (Weddell seal).